Consider the following 184-residue polypeptide: Photosystem I assembly protein Ycf4 (184 aa).

2 consecutive transmembrane segments (helical) span residues 20–42 (VNLC…GFSS) and 57–79 (IAFI…LGLY).

This sequence belongs to the Ycf4 family.

It localises to the plastid. The protein localises to the chloroplast thylakoid membrane. Its function is as follows. Seems to be required for the assembly of the photosystem I complex. In Adiantum capillus-veneris (Maidenhair fern), this protein is Photosystem I assembly protein Ycf4.